Consider the following 235-residue polypeptide: Large ribosomal subunit protein uL1 (235 aa).

The protein belongs to the universal ribosomal protein uL1 family. As to quaternary structure, part of the 50S ribosomal subunit.

In terms of biological role, binds directly to 23S rRNA. The L1 stalk is quite mobile in the ribosome, and is involved in E site tRNA release. Functionally, protein L1 is also a translational repressor protein, it controls the translation of the L11 operon by binding to its mRNA. In Mycobacterium bovis (strain ATCC BAA-935 / AF2122/97), this protein is Large ribosomal subunit protein uL1.